The primary structure comprises 563 residues: Group II intron-interrupted relaxase LtrB (563 aa).

Residue Y44 is part of the active site. Mg(2+)-binding residues include H159 and H161.

It belongs to the mobilization (MOB) protein type 1 family. The cofactor is Mg(2+). Mn(2+) is required as a cofactor.

Its function is as follows. Mediates initiation of conjugal transfer possibly by introducing a single-stranded nick at the potential origin of transfer. This Lactococcus lactis subsp. cremoris (strain MG1363) protein is Group II intron-interrupted relaxase LtrB (ltrBE1).